The primary structure comprises 256 residues: 6-phosphogluconolactonase (256 aa).

Belongs to the glucosamine/galactosamine-6-phosphate isomerase family. 6-phosphogluconolactonase subfamily.

It carries out the reaction 6-phospho-D-glucono-1,5-lactone + H2O = 6-phospho-D-gluconate + H(+). Its pathway is carbohydrate degradation; pentose phosphate pathway; D-ribulose 5-phosphate from D-glucose 6-phosphate (oxidative stage): step 2/3. Functionally, hydrolysis of 6-phosphogluconolactone to 6-phosphogluconate. This is 6-phosphogluconolactonase (pgl) from Chlamydia trachomatis serovar D (strain ATCC VR-885 / DSM 19411 / UW-3/Cx).